Reading from the N-terminus, the 255-residue chain is Wtf element wtf15 (255 aa).

The tract at residues 19–78 (KAGHEIDLEGSPPSEHNSEEKSTLPSNSDILTSANPVSQASETPDHSIESNTGSTQSPTS) is disordered. Polar residues-rich tracts occupy residues 41-60 (TLPS…QASE) and 67-78 (ESNTGSTQSPTS). Transmembrane regions (helical) follow at residues 85–105 (FSFC…CVLP), 112–132 (FLIA…SGSI), 162–182 (FLKT…LVLL), and 187–208 (WGWK…SFCL).

The protein belongs to the WTF family.

It is found in the spore membrane. In terms of biological role, may act in meiotic drive. The protein is Wtf element wtf15 of Schizosaccharomyces pombe (strain 972 / ATCC 24843) (Fission yeast).